A 470-amino-acid polypeptide reads, in one-letter code: Nuclear receptor subfamily 0 group B member 1 (470 aa).

3 tandem repeats follow at residues 1–67 (MAGE…YRCC), 68–133 (FCGK…YRCC), and 134–200 (FCGE…YRCC). The segment at 1–253 (MAGENHQWQG…RPVALKNPQV (253 aa)) is 4 X 67 AA tandem repeats. Short sequence motifs (LXXLL motif) lie at residues 13–17 (LYNML), 80–84 (LYSML), and 146–150 (LYSLL). Residues 201–253 (FCGEDHPQQGSTLYCMPTSTNQAQAAPEERPRAPWWDASSGALRPVALKNPQV) form a 4; truncated repeat. In terms of domain architecture, NR LBD spans 215–469 (CMPTSTNQAQ…DMMLEMLCTK (255 aa)). The short motif at 461–466 (MMLEML) is the AF-2 motif element.

This sequence belongs to the nuclear hormone receptor family. NR0 subfamily. In terms of assembly, homodimer. Interacts with NR5A1, NR5A2, NR0B2 and with COPS2. Interacts with ESRRB; represses ESRRB activity at the GATA6 promoter.

The protein resides in the nucleus. The protein localises to the cytoplasm. Nuclear receptor that lacks a DNA-binding domain and acts as a corepressor that inhibits the transcriptional activity of other nuclear receptors through heterodimeric interactions. Component of a cascade required for the development of the hypothalamic-pituitary-adrenal-gonadal axis. May also have a role in the development of the embryo and in the maintenance of embryonic stem cell pluripotency. The chain is Nuclear receptor subfamily 0 group B member 1 (NR0B1) from Pongo pygmaeus (Bornean orangutan).